A 432-amino-acid polypeptide reads, in one-letter code: Adenosylmethionine-8-amino-7-oxononanoate aminotransferase (432 aa).

A substrate-binding site is contributed by tryptophan 52. Residue 112–113 coordinates pyridoxal 5'-phosphate; it reads GS. Tyrosine 144 lines the substrate pocket. A pyridoxal 5'-phosphate-binding site is contributed by aspartate 245. Residues lysine 274 and glycine 307 each contribute to the substrate site. At lysine 274 the chain carries N6-(pyridoxal phosphate)lysine. Residue 308–309 coordinates pyridoxal 5'-phosphate; it reads PT. Substrate is bound at residue arginine 391.

This sequence belongs to the class-III pyridoxal-phosphate-dependent aminotransferase family. BioA subfamily. Homodimer. It depends on pyridoxal 5'-phosphate as a cofactor.

It is found in the cytoplasm. The catalysed reaction is (8S)-8-amino-7-oxononanoate + S-adenosyl-L-methionine = S-adenosyl-4-methylsulfanyl-2-oxobutanoate + (7R,8S)-7,8-diammoniononanoate. Its pathway is cofactor biosynthesis; biotin biosynthesis; 7,8-diaminononanoate from 8-amino-7-oxononanoate (SAM route): step 1/1. Catalyzes the transfer of the alpha-amino group from S-adenosyl-L-methionine (SAM) to 7-keto-8-aminopelargonic acid (KAPA) to form 7,8-diaminopelargonic acid (DAPA). It is the only aminotransferase known to utilize SAM as an amino donor. This Buchnera aphidicola subsp. Schizaphis graminum (strain Sg) protein is Adenosylmethionine-8-amino-7-oxononanoate aminotransferase.